Reading from the N-terminus, the 260-residue chain is DNA repair protein RecO (260 aa).

This sequence belongs to the RecO family.

Its function is as follows. Involved in DNA repair and RecF pathway recombination. The chain is DNA repair protein RecO from Streptococcus gordonii (strain Challis / ATCC 35105 / BCRC 15272 / CH1 / DL1 / V288).